We begin with the raw amino-acid sequence, 479 residues long: F-box/LRR-repeat protein 16 (479 aa).

The tract at residues 1-92 (MSSPGIDGDP…GPVSGPPVER (92 aa)) is disordered. Over residues 47 to 60 (CQPPPPPTLPPPSL) the composition is skewed to pro residues. Arginine 92 carries the post-translational modification Omega-N-methylarginine. In terms of domain architecture, F-box spans 94-139 (PLATDEKILNGLFWYFSACEKCILAQVCKAWRRVLYQPKFWAGLTP). LRR repeat units lie at residues 321-342 (NLTS…ELVA), 347-369 (KLRS…YVAC), 373-394 (RLEE…SYLS), 398-419 (SLRS…KHLL), 423-444 (NLRL…SGLV), and 446-470 (LQEL…YFSQ).

As to quaternary structure, interacts with SKP1 and CUL1.

Substrate-recognition component of the SCF (SKP1-CUL1-F-box protein)-type E3 ubiquitin ligase complex. The sequence is that of F-box/LRR-repeat protein 16 (Fbxl16) from Mus musculus (Mouse).